A 248-amino-acid polypeptide reads, in one-letter code: 14-3-3-like protein G-BOX factor 14 kappa (248 aa).

Phosphoserine is present on residues serine 70, serine 112, and serine 193. Threonine 214 carries the post-translational modification Phosphothreonine.

It belongs to the 14-3-3 family. Interacts with the isocitrate dehydrogenase IDH3, and malate dehydrogenases MDH1 and MDH2. Interacts with CINV1.

It localises to the nucleus. The protein localises to the cytoplasm. In terms of biological role, is associated with a DNA binding complex that binds to the G box, a well-characterized cis-acting DNA regulatory element found in plant genes. Involved in the regulation of nutrient metabolism. Negative regulator of freezing tolerance that modulates cold-responsive C-repeat-binding factors (CBF) DREB1A AND DREB1B proteins stability by facilitating their ubiquitin-mediated degradation; this processus is counteracted by B1L. The chain is 14-3-3-like protein G-BOX factor 14 kappa from Arabidopsis thaliana (Mouse-ear cress).